Consider the following 154-residue polypeptide: 6,7-dimethyl-8-ribityllumazine synthase (154 aa).

Residues Phe-21, 55 to 57 (AFE), and 79 to 81 (CVI) each bind 5-amino-6-(D-ribitylamino)uracil. 84–85 (AT) serves as a coordination point for (2S)-2-hydroxy-3-oxobutyl phosphate. The active-site Proton donor is the His-87. Phe-111 is a binding site for 5-amino-6-(D-ribitylamino)uracil. Arg-125 provides a ligand contact to (2S)-2-hydroxy-3-oxobutyl phosphate.

Belongs to the DMRL synthase family. As to quaternary structure, forms an icosahedral capsid composed of 60 subunits, arranged as a dodecamer of pentamers.

The catalysed reaction is (2S)-2-hydroxy-3-oxobutyl phosphate + 5-amino-6-(D-ribitylamino)uracil = 6,7-dimethyl-8-(1-D-ribityl)lumazine + phosphate + 2 H2O + H(+). It functions in the pathway cofactor biosynthesis; riboflavin biosynthesis; riboflavin from 2-hydroxy-3-oxobutyl phosphate and 5-amino-6-(D-ribitylamino)uracil: step 1/2. Functionally, catalyzes the formation of 6,7-dimethyl-8-ribityllumazine by condensation of 5-amino-6-(D-ribitylamino)uracil with 3,4-dihydroxy-2-butanone 4-phosphate. This is the penultimate step in the biosynthesis of riboflavin. The protein is 6,7-dimethyl-8-ribityllumazine synthase of Macrococcus caseolyticus (strain JCSC5402) (Macrococcoides caseolyticum).